Consider the following 195-residue polypeptide: MARTEKIYIYGASGHGLVCEDVAKNMGYKECIFLDDFKGMKFESTLPKYDFFIAIGNNEIRKKIYQKISENGFKIVNLIHKSALISPSAIVEENAGILIMPYVVINAKAKIEKGVILNTSSVIEHECVIGEFSHVSVGAKCAGNVKIGKNCFLGINSCVLPNLSLADDSILGGGATLVKNQDEKGVFVGVPAKRM.

Substrate contacts are provided by residues 13–15, 35–36, and glycine 56; these read SGH and DD. The active-site Proton acceptor is the histidine 125. Acetyl-CoA is bound by residues histidine 134, isoleucine 155, and glycine 173.

Belongs to the transferase hexapeptide repeat family. In terms of assembly, homotrimer.

It carries out the reaction UDP-N-acetylbacillosamine + acetyl-CoA = UDP-N,N'-diacetylbacillosamine + CoA + H(+). Its pathway is protein modification; protein glycosylation. Functionally, acetyltransferase that modifies the UDP-4-amino-sugar to form UDP-N,N'-diacetylbacillosamine in the N-linked protein glycosylation pathway. In Campylobacter jejuni subsp. jejuni serotype O:2 (strain ATCC 700819 / NCTC 11168), this protein is UDP-N-acetylbacillosamine N-acetyltransferase (pglD).